Consider the following 417-residue polypeptide: Probable phosphoglycerate kinase (417 aa).

14 residues coordinate (2R)-3-phosphoglycerate: Val23, Asp24, Phe25, Asn26, Gln38, Arg39, Ser62, His63, Gly65, Arg66, Leu121, Arg122, His169, and Arg170. ADP is bound at residue Gly213. Position 213 (Gly213) interacts with CDP. AMP-binding residues include Ala214 and Lys215. Ala214 serves as a coordination point for ATP. A Mg(2+)-binding site is contributed by Ala214. Mg(2+) is bound by residues Ala217 and Asp218. CDP is bound at residue Asp218. Residue Lys219 participates in AMP binding. Lys219 contacts ATP. An ADP-binding site is contributed by Gly237. Residue Gly237 participates in CDP binding. The AMP site is built by Gly238 and Gly312. Gly238 and Gly312 together coordinate ATP. Positions 337, 339, and 342 each coordinate CDP. An ADP-binding site is contributed by Phe342. Glu343 lines the AMP pocket. ATP contacts are provided by Glu343, Asp374, and Thr375. Asp374 provides a ligand contact to Mg(2+).

The protein belongs to the phosphoglycerate kinase family. Monomer. The cofactor is Mg(2+).

It is found in the cytoplasm. The catalysed reaction is (2R)-3-phosphoglycerate + ATP = (2R)-3-phospho-glyceroyl phosphate + ADP. It participates in carbohydrate degradation; glycolysis; pyruvate from D-glyceraldehyde 3-phosphate: step 2/5. This is Probable phosphoglycerate kinase (pgk-1) from Caenorhabditis elegans.